We begin with the raw amino-acid sequence, 351 residues long: Thiamine-phosphate synthase (351 aa).

The unknown stretch occupies residues 1-127 (MQNLAPASEG…SETAKALRYR (127 aa)). Residues 64–84 (RAARQTDQDPGTALSHPQERD) are disordered. Positions 128–351 (VYILEQALTL…LRRLSQGEPS (224 aa)) are thiamine-phosphate synthase. 4-amino-2-methyl-5-(diphosphooxymethyl)pyrimidine contacts are provided by residues 178-182 (QYRDK) and Asn210. Asp211 and Asp230 together coordinate Mg(2+). Residue Ser249 participates in 4-amino-2-methyl-5-(diphosphooxymethyl)pyrimidine binding. Residue 275-277 (TPT) participates in 2-[(2R,5Z)-2-carboxy-4-methylthiazol-5(2H)-ylidene]ethyl phosphate binding. Lys278 is a binding site for 4-amino-2-methyl-5-(diphosphooxymethyl)pyrimidine. 2-[(2R,5Z)-2-carboxy-4-methylthiazol-5(2H)-ylidene]ethyl phosphate is bound at residue Gly305.

It belongs to the thiamine-phosphate synthase family. Requires Mg(2+) as cofactor.

It catalyses the reaction 2-[(2R,5Z)-2-carboxy-4-methylthiazol-5(2H)-ylidene]ethyl phosphate + 4-amino-2-methyl-5-(diphosphooxymethyl)pyrimidine + 2 H(+) = thiamine phosphate + CO2 + diphosphate. The catalysed reaction is 2-(2-carboxy-4-methylthiazol-5-yl)ethyl phosphate + 4-amino-2-methyl-5-(diphosphooxymethyl)pyrimidine + 2 H(+) = thiamine phosphate + CO2 + diphosphate. It carries out the reaction 4-methyl-5-(2-phosphooxyethyl)-thiazole + 4-amino-2-methyl-5-(diphosphooxymethyl)pyrimidine + H(+) = thiamine phosphate + diphosphate. It participates in cofactor biosynthesis; thiamine diphosphate biosynthesis; thiamine phosphate from 4-amino-2-methyl-5-diphosphomethylpyrimidine and 4-methyl-5-(2-phosphoethyl)-thiazole: step 1/1. Functionally, condenses 4-methyl-5-(beta-hydroxyethyl)thiazole monophosphate (THZ-P) and 2-methyl-4-amino-5-hydroxymethyl pyrimidine pyrophosphate (HMP-PP) to form thiamine monophosphate (TMP). The protein is Thiamine-phosphate synthase of Thermosynechococcus vestitus (strain NIES-2133 / IAM M-273 / BP-1).